The following is a 581-amino-acid chain: Tetratricopeptide repeat and J domain-containing co-chaperone DNJ1 (581 aa).

The signal sequence occupies residues 1 to 19 (MKATLLPSLLALSLTLCLA). TPR repeat units lie at residues 48–81 (ASQHLTQANVALQSGRYQDALSAFDLALQADPSS), 82–115 (WLTYYRRATAQLSLGRTSAALQDFQSLLKLNPKF), 116–149 (DKAYLQQAKVYLKEGDCDKAKQALKTYDSIRAEK), 221–254 (LETRLVRARCQTMKGRIEDAMADWTRAVHLTPSP), 257–293 (LRRLSVLSYFVVSEPGSQSRDAGLQHLKACLHSDPDN), 378–411 (LELHTMYCKAYTELNDMDKAMPYCELVLAKDPDN), and 412–445 (VEATLARAELALQREDYDQAVRDLTKAFDASGRT). N-linked (GlcNAc...) asparagine glycosylation occurs at Asn-293. The region spanning 467–528 (DYYKVLGVKR…ELRKKYDQGD (62 aa)) is the J domain. The disordered stretch occupies residues 522–544 (KKYDQGDDPNDPMGGQQGGYGNP).

Interacts with the ER chaperone BIP1.

It is found in the endoplasmic reticulum lumen. In terms of biological role, endoplasmic reticulum (ER) protein that functions as a co-chaperone for BIP1 during ER stress. Might be specifically involved in the refolding of N-glycosylated proteins. This is Tetratricopeptide repeat and J domain-containing co-chaperone DNJ1 from Mycosarcoma maydis (Corn smut fungus).